A 160-amino-acid chain; its full sequence is Cathelin-related peptide SC5 (160 aa).

The signal sequence occupies residues methionine 1 to alanine 29. The propeptide occupies glutamine 30–valine 131. 2 disulfides stabilise this stretch: cysteine 86/cysteine 97 and cysteine 108/cysteine 125.

Belongs to the cathelicidin family.

The protein resides in the secreted. Functionally, broad spectrum bactericidal agent. In Ovis aries (Sheep), this protein is Cathelin-related peptide SC5.